A 200-amino-acid polypeptide reads, in one-letter code: Mediator of RNA polymerase II transcription subunit 22 (200 aa).

Positions 93–122 (SVNEAIDQRNQQLRTLQEECDRKLITLRDE) form a coiled coil. The tract at residues 166–200 (LSAPLLASPEPSAGPLQVAAPAHSHAGGPGPTEHA) is disordered.

Belongs to the Mediator complex subunit 22 family. In terms of assembly, component of the Mediator complex, which is composed of MED1, MED4, MED6, MED7, MED8, MED9, MED10, MED11, MED12, MED13, MED13L, MED14, MED15, MED16, MED17, MED18, MED19, MED20, MED21, MED22, MED23, MED24, MED25, MED26, MED27, MED29, MED30, MED31, CCNC, CDK8 and CDC2L6/CDK11. The MED12, MED13, CCNC and CDK8 subunits form a distinct module termed the CDK8 module. Mediator containing the CDK8 module is less active than Mediator lacking this module in supporting transcriptional activation. Individual preparations of the Mediator complex lacking one or more distinct subunits have been variously termed ARC, CRSP, DRIP, PC2, SMCC and TRAP.

Its subcellular location is the nucleus. Its function is as follows. Component of the Mediator complex, a coactivator involved in the regulated transcription of nearly all RNA polymerase II-dependent genes. Mediator functions as a bridge to convey information from gene-specific regulatory proteins to the basal RNA polymerase II transcription machinery. Mediator is recruited to promoters by direct interactions with regulatory proteins and serves as a scaffold for the assembly of a functional preinitiation complex with RNA polymerase II and the general transcription factors. The polypeptide is Mediator of RNA polymerase II transcription subunit 22 (MED22) (Homo sapiens (Human)).